Reading from the N-terminus, the 117-residue chain is MSWRGRSTYYWPRPRRYVEPPEMIGPMRPEQFSDEVEPATPEEGEPATQRQDPAAAQEGEDEGASAGQGPKPEADSQEQGHPQTGCECEDGPDGQEMDPPNPEEVKTPEEGEKQSQC.

The disordered stretch occupies residues 1-117; it reads MSWRGRSTYY…PEEGEKQSQC (117 aa). 2 stretches are compositionally biased toward acidic residues: residues 32-45 and 87-96; these read FSDEVEPATPEEGE and ECEDGPDGQE. Over residues 103-117 the composition is skewed to basic and acidic residues; that stretch reads EEVKTPEEGEKQSQC.

This sequence belongs to the GAGE family.

This is G antigen 13 from Homo sapiens (Human).